Reading from the N-terminus, the 338-residue chain is DNA-directed RNA polymerase subunit alpha (338 aa).

Positions 1-226 are alpha N-terminal domain (alpha-NTD); that stretch reads MLIAQRPTLT…ELFGLTRELN (226 aa). Residues 243-338 are alpha C-terminal domain (alpha-CTD); it reads YAESLGTPVE…DDDYAETEQY (96 aa). The segment at 319-338 is disordered; the sequence is AAAEAYDEANDDDYAETEQY. The span at 323–338 shows a compositional bias: acidic residues; the sequence is AYDEANDDDYAETEQY.

This sequence belongs to the RNA polymerase alpha chain family. In terms of assembly, homodimer. The RNAP catalytic core consists of 2 alpha, 1 beta, 1 beta' and 1 omega subunit. When a sigma factor is associated with the core the holoenzyme is formed, which can initiate transcription.

It catalyses the reaction RNA(n) + a ribonucleoside 5'-triphosphate = RNA(n+1) + diphosphate. Functionally, DNA-dependent RNA polymerase catalyzes the transcription of DNA into RNA using the four ribonucleoside triphosphates as substrates. This chain is DNA-directed RNA polymerase subunit alpha, found in Cutibacterium acnes (strain DSM 16379 / KPA171202) (Propionibacterium acnes).